Consider the following 419-residue polypeptide: UDP-N-acetylglucosamine 1-carboxyvinyltransferase (419 aa).

22-23 serves as a coordination point for phosphoenolpyruvate; the sequence is KN. Residue Arg93 coordinates UDP-N-acetyl-alpha-D-glucosamine. Cys117 serves as the catalytic Proton donor. Residue Cys117 is modified to 2-(S-cysteinyl)pyruvic acid O-phosphothioketal. Residues Asp307 and Ile329 each contribute to the UDP-N-acetyl-alpha-D-glucosamine site.

Belongs to the EPSP synthase family. MurA subfamily.

The protein resides in the cytoplasm. The enzyme catalyses phosphoenolpyruvate + UDP-N-acetyl-alpha-D-glucosamine = UDP-N-acetyl-3-O-(1-carboxyvinyl)-alpha-D-glucosamine + phosphate. The protein operates within cell wall biogenesis; peptidoglycan biosynthesis. Cell wall formation. Adds enolpyruvyl to UDP-N-acetylglucosamine. This chain is UDP-N-acetylglucosamine 1-carboxyvinyltransferase, found in Shewanella putrefaciens (strain CN-32 / ATCC BAA-453).